The primary structure comprises 238 residues: uncharacterized protein (238 aa).

The S4 RNA-binding domain maps to 1–64; that stretch reads MRLDKYLSKS…KPKKNVYLML (64 aa). D103 (nucleophile) is an active-site residue.

This sequence belongs to the pseudouridine synthase RsuA family.

It carries out the reaction a uridine in RNA = a pseudouridine in RNA. This is an uncharacterized protein from Aquifex aeolicus (strain VF5).